We begin with the raw amino-acid sequence, 990 residues long: Storkhead-box protein 1 (990 aa).

The span at 396-408 (TTRHKDSSKEVIG) shows a compositional bias: basic and acidic residues. Disordered stretches follow at residues 396–471 (TTRH…VHHL), 562–586 (VAKA…PRRV), 712–736 (GLSD…DGGC), and 809–832 (LFSN…SRIP). Positions 416–431 (KSRRRGSSHKGRHKAR) are enriched in basic residues. The segment covering 809-830 (LFSNAGESPNPDLSDNPGQNSR) has biased composition (polar residues).

Detected in sensory epithelial cells of the inner ear but not in adjacent surrounding tissue (at protein level).

It is found in the nucleus. It localises to the cytoplasm. Its subcellular location is the cytoskeleton. The protein resides in the microtubule organizing center. The protein localises to the centrosome. Involved in regulating the levels of reactive oxidative species and reactive nitrogen species and in mitochondrial homeostasis in the placenta. Required for regulation of inner ear epithelial cell proliferation via the AKT signaling pathway. Involved in cell cycle regulation by binding to the CCNB1 promoter, up-regulating its expression and promoting mitotic entry. Induces phosphorylation of MAPT/tau. This is Storkhead-box protein 1 from Mus musculus (Mouse).